The following is a 185-amino-acid chain: NOP protein chaperone 1 (185 aa).

Residues 1–40 (MEVHGKPKASPSCSSPTRDSSGVPVSKELLTAGSDGRGGI) form a disordered region. Residues 10–21 (SPSCSSPTRDSS) are compositionally biased toward low complexity. Phosphoserine occurs at positions 34 and 66. Residues 118 to 185 (FEMNQSDSKE…LDSPASKKKK (68 aa)) are disordered. Over residues 143–152 (SESEDEDDSI) the composition is skewed to acidic residues. S178 is subject to Phosphoserine.

As to quaternary structure, interacts with NOP58, RUVBL1 and RUVBL2; the interactions are direct and NOPCHAP1 bridges the association of NOP58 with RUVBL1:RUVBL2 even in absence of snoRNAs. The interactions with RUVBL1 and RUVBL2 are disrupted upon ATP binding.

It localises to the nucleus. In terms of biological role, client-loading PAQosome/R2TP complex cofactor that selects NOP58 to promote box C/D small nucleolar ribonucleoprotein (snoRNP) assembly. Acts as a bridge between NOP58 and the R2TP complex via RUVBL1:RUVBL2. The protein is NOP protein chaperone 1 of Homo sapiens (Human).